The sequence spans 363 residues: UDP-3-O-acylglucosamine N-acyltransferase (363 aa).

The active-site Proton acceptor is His237. The tract at residues 338–363 (EQNSTDRAPNAKMLEVGVDPETTCSS) is disordered.

This sequence belongs to the transferase hexapeptide repeat family. LpxD subfamily. As to quaternary structure, homotrimer.

It carries out the reaction a UDP-3-O-[(3R)-3-hydroxyacyl]-alpha-D-glucosamine + a (3R)-hydroxyacyl-[ACP] = a UDP-2-N,3-O-bis[(3R)-3-hydroxyacyl]-alpha-D-glucosamine + holo-[ACP] + H(+). The protein operates within bacterial outer membrane biogenesis; LPS lipid A biosynthesis. Catalyzes the N-acylation of UDP-3-O-acylglucosamine using 3-hydroxyacyl-ACP as the acyl donor. Is involved in the biosynthesis of lipid A, a phosphorylated glycolipid that anchors the lipopolysaccharide to the outer membrane of the cell. This chain is UDP-3-O-acylglucosamine N-acyltransferase, found in Synechococcus sp. (strain JA-2-3B'a(2-13)) (Cyanobacteria bacterium Yellowstone B-Prime).